A 243-amino-acid polypeptide reads, in one-letter code: Asnovolin H synthase nvfL (243 aa).

7 consecutive transmembrane segments (helical) span residues 20 to 42 (ANTL…AYYS), 51 to 71 (ALIP…IHCP), 75 to 95 (FVRI…YAAI), 112 to 132 (LPFI…ALAA), 138 to 160 (IAFV…SQLL), 169 to 189 (SYVV…MVTI), and 205 to 225 (LLLW…FCFY).

The protein belongs to the paxB family.

It is found in the membrane. The catalysed reaction is (3R)-[(10S)-11-epoxyfarnesyl]-2,3,5-trimethyl-6-oxido-4-oxocyclohexa-1,5-diene-1-carboxylate + H(+) = asnovolin H. The protein operates within secondary metabolite biosynthesis; terpenoid biosynthesis. Functionally, terpene cyclase; part of the gene cluster that mediates the biosynthesis of novofumigatonin, a heavily oxygenated meroterpenoid containing a unique orthoester moiety. The first step of the pathway is the synthesis of 3,5-dimethylorsellinic acid (DMOA) by the polyketide synthase nvfA via condensation of one acetyl-CoA starter unit with 3 malonyl-CoA units and 2 methylations. DMOA is then converted to farnesyl-DMOA by the farnesyltransferase nvfB. Epoxydation by FAD-dependent monooxygenase nvfK, followed by a protonation-initiated cyclization catalyzed by the terpene cyclase nvfL leads to the production of asnavolin H. The short chain dehydrogenase nvfC then as a 3-OH dehydrogenase of asnovolin H to yield chemesin D. There are two branches to synthesize asnovolin A from chemesin D. In one branch, chemesin D undergoes Baeyer-Villiger oxidation by nvfH, methylation by nvfJ, and enoyl reduction by the nvfM D enoylreductase that reduces the double bond between C-5'and C-6', to form respectively asnovolin I, asnovolin K, and asnovolin A. In the other branch, the methylation precedes the Baeyer-Villiger oxidation and the enoyl reduction to yield asnovolin A via the asnovolin J intermediate. Asnovolin A is further converted to fumigatonoid A by the Fe(II)/2-oxoglutarate-dependent dioxygenase nvfI that catalyzes an endoperoxidation reaction. The alpha/beta hydrolase nvfD then acts as an epimerase that converts fumigatonoid A to its C-5' epimer, which then undergoes spontaneous or nvfD-catalyzed lactonization. The following step utilizes the ketoreductase nvfG to produce fumigatonoid B. The dioxygenase nvfE further converts fumigatonoid B into fumigatonoid C. Finally the Fe(II)/2-oxoglutarate-dependent dioxygenase nvfF catalyzes two rounds of oxidation to transform fumigatonoid C into the end product, novofumigatonin A. The chain is Asnovolin H synthase nvfL from Aspergillus novofumigatus (strain IBT 16806).